The following is a 1644-amino-acid chain: MEEPKTSKNENHEPKKNIICEESKAVKIISNQTLKPRNDKSEIGTSSLNRNSSKKTKQNDICIEKTEAKSCKVNAASVPGPKDLGLVHRDQSHCKMKKLPNSPMKAQKGSSQTKLEKTPSLQTKAEKVPKSPNLPVKAEKAPCTTAEATTEKALNSQRKEENTPTSQMKLQKTPRSPLEPENVPSLLLKENVKQTESQQTGKKLTSSFVSMDKRKSEALQGEKSALENSSLSQKQQTQTDNIADSDDSASGIEDTADDLSKMKSEESNKENSSEMDYLENATVIDESALTPEQRLGLKQAEERLERDHIFRLEKRSPEYTNCRYLCKLCLIHIENIQGAHKHIKEKRHKKNILEKQEESELRSLPSPSSAHLAALSVAVVELAKEQGITDDDLRIRQDIVEEMSKVIMTFLPECSLRLYGSSLTKFALKSSDVNIDIKFPPKMNHPDLLIQVLGILKKSALYIDVESDFHAKVPVVVCKDRKSALLCRVSAGNDMACLTTDLLAALGKVEPVFTPLVLAFRYWAKLCYIDSQTDGGIPSYCFALMVMFFLQQRKPPLLPCLLGSWIEGFDPKRMDDFQLKGIVEEKFVKWEYNSSSATEKNLIADENKAKADEPKDDTKKTETDNQSNAAKAKHGKSPLTLEAPNQVPLGQLWLELLKFYTLDFALEEYVICVRIQDILTRENKNWPKRRIAIEDPFSVKRNVARSLNSQLVYEYVVERFRAAYRYFACPQKKGGNKSTMDPKKKEKGKLSSKKPVKSDCSATNCCILGESAEKIHMERGQPAKHDETEFTSQRCIVDNDSLLVNELGLANHGQDSSSLSTASGGSDLKQKSAEKQGDLTPSETSLKKELSQCICIGTPDGAESAGTDCRSNLEMDSSHQIVCNNVSATSCNCKATEVTSDLVDEDNLPSQELYYVFDKFILTSGKPPTIVCSICKKDGHSKNDCPEDFRKIDLKPLPPMTNRFREILDLVCKRCFDELSPPCSEQHNREQILIGLEKFIQKEYDEKARLCLFGSSKNGFGFRDSDLDICMTLEGHENAEKLNCKEIIENLAKILKRHPGLRNILPITTAKVPIVKFEHRRSGLEGDISLYNTLAQHNTRMLATYAAIDPRVQYLGYTMKVFAKRCDIGDASRGSLSSYAYILMVLYFLQQRKPPVIPVLQEIFDGKQIPQRMVDGWNAFFFDKTEELKKRLPSLGKNTESLGELWLGLLRFYTEEFDFKEYVISIRQKKLLTTFEKQWTSKCIAIEDPFDLNHNLGAGVSRKMTNFIMKAFINGRKLFGTPFYPLIGREAEYFFDSRVLTDGELAPNDRCCRVCGKIGHYMKDCPKRKRLKKKDSEEEKEGNEEEKDSRDLLDSRDLRCFICGDAGHVRRECPEVKMARQRNSSVAAAQLVRNLVNAQQVAGSAQQQSDQSIRTRQSSECSDSPSYSPQPQPFPQNSPQPSALPPPPSQPGSQPKLGPPQQGGQPPHQVQMPLYNFPQSPPAHYSPMHSMGLLPMHPLQIPAPSWPIHGPMLHSAPGSTPSNIGLNDPSIIFAQPAARPMAIPSPSHDGHWPRTVAPNSLVNNGAVGNSEPRFRGLNPPIPWEHAPRHFPLVPASWPYGLHQNFMHQGNPRFQPKPFYAQADRCATRRCRERCPHPPRGNVSE.

Disordered stretches follow at residues 30-60 (SNQT…KQND) and 75-277 (AASV…EMDY). Serine 102 carries the post-translational modification Phosphoserine. A compositionally biased stretch (polar residues) spans 108–123 (KGSSQTKLEKTPSLQT). Serine 131 carries the phosphoserine modification. Composition is skewed to polar residues over residues 146–156 (AEATTEKALNS) and 163–174 (TPTSQMKLQKTP). Serine 176 is subject to Phosphoserine. Composition is skewed to polar residues over residues 194 to 209 (QTES…SSFV) and 226 to 242 (LENS…TDNI). The segment covering 258–272 (DLSKMKSEESNKENS) has biased composition (basic and acidic residues). Residues 273–353 (SEMDYLENAT…KEKRHKKNIL (81 aa)) form a required for interaction with LIN28A and pre-let-7 RNA region. Zn(2+)-binding residues include cysteine 326, cysteine 329, histidine 342, and histidine 348. A compositionally biased stretch (basic and acidic residues) spans 603 to 623 (IADENKAKADEPKDDTKKTET). A disordered region spans residues 603-640 (IADENKAKADEPKDDTKKTETDNQSNAAKAKHGKSPLT). The 50-residue stretch at 649–698 (LGQLWLELLKFYTLDFALEEYVICVRIQDILTRENKNWPKRRIAIEDPFS) folds into the PAP-associated 1 domain. 2 disordered regions span residues 733-759 (KGGN…VKSD) and 812-841 (HGQD…DLTP). Basic residues predominate over residues 745–755 (KEKGKLSSKKP). The segment covering 815–827 (DSSSLSTASGGSD) has biased composition (low complexity). Over residues 828 to 837 (LKQKSAEKQG) the composition is skewed to basic and acidic residues. A sufficient for monouridylation activity region spans residues 918 to 1634 (DKFILTSGKP…CATRRCRERC (717 aa)). Residues 930–947 (IVCSICKKDGHSKNDCPE) form a CCHC-type 1 zinc finger. Residues 1015-1018 (SSKN), 1025-1028 (SDLD), asparagine 1098, lysine 1120, 1138-1142 (SYAYI), and histidine 1254 each bind UTP. Residues aspartate 1026 and aspartate 1028 each coordinate Mg(2+). The region spanning 1201-1254 (SLGELWLGLLRFYTEEFDFKEYVISIRQKKLLTTFEKQWTSKCIAIEDPFDLNH) is the PAP-associated 2 domain. The CCHC-type 2 zinc finger occupies 1310–1327 (RCCRVCGKIGHYMKDCPK). A disordered region spans residues 1329–1350 (KRLKKKDSEEEKEGNEEEKDSR). The CCHC-type 3 zinc-finger motif lies at 1358 to 1375 (LRCFICGDAGHVRRECPE). Over residues 1402-1427 (AGSAQQQSDQSIRTRQSSECSDSPSY) the composition is skewed to low complexity. The tract at residues 1402 to 1483 (AGSAQQQSDQ…LYNFPQSPPA (82 aa)) is disordered. The segment covering 1428 to 1450 (SPQPQPFPQNSPQPSALPPPPSQ) has biased composition (pro residues). The span at 1451-1473 (PGSQPKLGPPQQGGQPPHQVQMP) shows a compositional bias: low complexity. Arginine 1624 is subject to Omega-N-methylarginine.

Belongs to the DNA polymerase type-B-like family. As to quaternary structure, interacts with LIN28A in the presence of pre-let-7 RNA. Interacts with T2BP. Interacts with MOV10; the interaction is RNA-dependent. It depends on Mg(2+) as a cofactor. The cofactor is Mn(2+). As to expression, ubiquitously expressed.

The protein localises to the nucleus. The protein resides in the cytoplasm. Its subcellular location is the cytoplasmic ribonucleoprotein granule. The enzyme catalyses RNA(n) + UTP = RNA(n)-3'-uridine ribonucleotide + diphosphate. Functionally, uridylyltransferase that mediates the terminal uridylation of mRNAs with short (less than 25 nucleotides) poly(A) tails, hence facilitating global mRNA decay. Essential for both oocyte maturation and fertility. Through 3' terminal uridylation of mRNA, sculpts, with TUT7, the maternal transcriptome by eliminating transcripts during oocyte growth. Involved in microRNA (miRNA)-induced gene silencing through uridylation of deadenylated miRNA targets. Also functions as an integral regulator of microRNA biogenesiS using 3 different uridylation mechanisms. Acts as a suppressor of miRNA biogenesis by mediating the terminal uridylation of some miRNA precursors, including that of let-7 (pre-let-7), miR107, miR-143 and miR-200c. Uridylated miRNAs are not processed by Dicer and undergo degradation. Degradation of pre-let-7 contributes to the maintenance of embryonic stem (ES) cell pluripotency. Also catalyzes the 3' uridylation of miR-26A, a miRNA that targets IL6 transcript. This abrogates the silencing of IL6 transcript, hence promoting cytokine expression. In the absence of LIN28A, TUT7 and TUT4 monouridylate group II pre-miRNAs, which includes most of pre-let7 members, that shapes an optimal 3' end overhang for efficient processing. Add oligo-U tails to truncated pre-miRNAS with a 5' overhang which may promote rapid degradation of non-functional pre-miRNA species. May also suppress Toll-like receptor-induced NF-kappa-B activation via binding to T2BP. Does not play a role in replication-dependent histone mRNA degradation. Due to functional redundancy between TUT4 and TUT7, the identification of the specific role of each of these proteins is difficult. TUT4 and TUT7 restrict retrotransposition of long interspersed element-1 (LINE-1) in cooperation with MOV10 counteracting the RNA chaperonne activity of L1RE1. TUT7 uridylates LINE-1 mRNAs in the cytoplasm which inhibits initiation of reverse transcription once in the nucleus, whereas uridylation by TUT4 destabilizes mRNAs in cytoplasmic ribonucleoprotein granules. This Mus musculus (Mouse) protein is Terminal uridylyltransferase 4.